We begin with the raw amino-acid sequence, 366 residues long: Ferrochelatase (366 aa).

Fe cation contacts are provided by His-209 and Glu-290.

This sequence belongs to the ferrochelatase family.

It localises to the cytoplasm. The enzyme catalyses heme b + 2 H(+) = protoporphyrin IX + Fe(2+). Its pathway is porphyrin-containing compound metabolism; protoheme biosynthesis; protoheme from protoporphyrin-IX: step 1/1. Functionally, catalyzes the ferrous insertion into protoporphyrin IX. The sequence is that of Ferrochelatase from Teredinibacter turnerae (strain ATCC 39867 / T7901).